The following is a 197-amino-acid chain: uncharacterized protein (197 aa).

The signal sequence occupies residues Met-1–Ala-23. Topologically, residues Ser-24 to Thr-61 are extracellular. An N-linked (GlcNAc...) asparagine glycan is attached at Asn-26. A helical transmembrane segment spans residues Leu-62–Phe-82. Residues His-83–Ser-197 are Cytoplasmic-facing. Residues Met-94–Ser-180 are disordered. Basic and acidic residues-rich tracts occupy residues Arg-96–Ser-107 and His-125–Arg-136. A compositionally biased stretch (low complexity) spans Cys-141–Pro-161. A compositionally biased stretch (pro residues) spans Cys-162–Ser-171.

The protein localises to the membrane. This is an uncharacterized protein from Homo sapiens (Human).